The sequence spans 98 residues: MAAINRDDVAHLARLAHIEMSAEELDRMAVELAVIVDSVKSVSEAAGEDVPATSHPIPLTNVFREDVVGHTFTAEQALSGAPDSYENRFKVPAILDED.

Belongs to the GatC family. Heterotrimer of A, B and C subunits.

The catalysed reaction is L-glutamyl-tRNA(Gln) + L-glutamine + ATP + H2O = L-glutaminyl-tRNA(Gln) + L-glutamate + ADP + phosphate + H(+). It catalyses the reaction L-aspartyl-tRNA(Asn) + L-glutamine + ATP + H2O = L-asparaginyl-tRNA(Asn) + L-glutamate + ADP + phosphate + 2 H(+). In terms of biological role, allows the formation of correctly charged Asn-tRNA(Asn) or Gln-tRNA(Gln) through the transamidation of misacylated Asp-tRNA(Asn) or Glu-tRNA(Gln) in organisms which lack either or both of asparaginyl-tRNA or glutaminyl-tRNA synthetases. The reaction takes place in the presence of glutamine and ATP through an activated phospho-Asp-tRNA(Asn) or phospho-Glu-tRNA(Gln). The protein is Aspartyl/glutamyl-tRNA(Asn/Gln) amidotransferase subunit C of Paenarthrobacter aurescens (strain TC1).